The chain runs to 708 residues: Probable GTP diphosphokinase RSH3, chloroplastic (708 aa).

2 disordered regions span residues 1 to 50 and 109 to 134; these read MSLP…AAGG and HSPV…SWLA. A chloroplast-targeting transit peptide spans 1 to 58; sequence MSLPAISLYTSPPPGAVYSSEFDPSSRGSSPPCSTAPPSTSHRPPAAAGGLSCLFSSP. Low complexity-rich tracts occupy residues 29 to 41 and 118 to 131; these read SSPP…PSTS and PSSS…PPAS. The HD domain occupies 233-337; that stretch reads YLQHCVETAV…IKLADRVHNM (105 aa).

It belongs to the RelA/SpoT family.

It is found in the plastid. The protein resides in the chloroplast. It catalyses the reaction GTP + ATP = guanosine 3'-diphosphate 5'-triphosphate + AMP. Probable ppGpp (guanosine 3'-diphosphate 5'-diphosphate) synthetase that may be involved in a rapid plant ppGpp-mediated response to pathogens and other stresses. The protein is Probable GTP diphosphokinase RSH3, chloroplastic (RSH3) of Oryza sativa subsp. japonica (Rice).